Reading from the N-terminus, the 239-residue chain is Protein Thf1 (239 aa).

Residues 183–219 adopt a coiled-coil conformation; it reads ERVKKDLELYRSNLDRLKQARAIVEEMVKAARRQQER. The segment covering 211 to 221 has biased composition (basic and acidic residues); it reads KAARRQQERRQ. Positions 211 to 239 are disordered; it reads KAARRQQERRQSTASLPETPAADRRESSG.

The protein belongs to the THF1 family.

In terms of biological role, may be involved in photosynthetic membrane biogenesis. The protein is Protein Thf1 of Synechococcus sp. (strain JA-3-3Ab) (Cyanobacteria bacterium Yellowstone A-Prime).